We begin with the raw amino-acid sequence, 115 residues long: Valyl--tRNA ligase modifier (115 aa).

Functionally, binds to the host (E.coli) valyl--tRNA ligase and thereby changes several of its physicochemical properties. This chain is Valyl--tRNA ligase modifier (vs), found in Enterobacteria phage T4 (Bacteriophage T4).